The following is a 569-amino-acid chain: Cytosolic purine 5'-nucleotidase (569 aa).

Asp-52 functions as the Nucleophile in the catalytic mechanism. IMP contacts are provided by Asp-52 and Asp-54. Mg(2+) contacts are provided by Asp-52 and Asp-54. Asp-54 functions as the Proton donor in the catalytic mechanism. ATP is bound by residues Arg-144 and Asn-154. Arg-202, Asp-206, Lys-215, Thr-249, Asn-250, Ser-251, and Lys-292 together coordinate IMP. Asp-351 provides a ligand contact to Mg(2+). Positions 453 and 456 each coordinate ATP. A disordered region spans residues 527–569; sequence SISEIKPPNLFPQAPQEITHCHDEDDDEEEEEEEVEEEEEEEE. The tract at residues 548-569 is required for tetramer assembly; it reads HDEDDDEEEEEEEVEEEEEEEE. Residues 550–569 are compositionally biased toward acidic residues; sequence EDDDEEEEEEEVEEEEEEEE.

It belongs to the 5'(3')-deoxyribonucleotidase family. Homotetramer. Mg(2+) is required as a cofactor.

The protein localises to the cytoplasm. The protein resides in the cytosol. It carries out the reaction a ribonucleoside 5'-phosphate + H2O = a ribonucleoside + phosphate. The enzyme catalyses a 2'-deoxyribonucleoside + a ribonucleoside 5'-phosphate = a ribonucleoside + a 2'-deoxyribonucleoside 5'-phosphate. The catalysed reaction is IMP + H2O = inosine + phosphate. It catalyses the reaction GMP + H2O = guanosine + phosphate. It carries out the reaction dGMP + H2O = 2'-deoxyguanosine + phosphate. The enzyme catalyses dIMP + H2O = 2'-deoxyinosine + phosphate. The catalysed reaction is XMP + H2O = xanthosine + phosphate. It catalyses the reaction inosine + GMP = guanosine + IMP. It carries out the reaction dGMP + inosine = 2'-deoxyguanosine + IMP. The enzyme catalyses dIMP + inosine = 2'-deoxyinosine + IMP. The catalysed reaction is inosine + UMP = uridine + IMP. It catalyses the reaction inosine + CMP = cytidine + IMP. It carries out the reaction inosine + AMP = IMP + adenosine. With respect to regulation, allosterically activated by various compounds including ATP, 2,3-BPG/2,3-Bisphosphoglyceric acid and Ap4A/P1,P4-bis(5'-adenosyl) tetraphosphate. Binding of an allosteric activator is a prerequisiste to magnesium and substrate binding. Inhibited by inorganic phosphate. Inhibited by inosine, guanosine, p-chloromercuribenzoate and NaF. Broad specificity cytosolic 5'-nucleotidase that catalyzes the dephosphorylation of 6-hydroxypurine nucleoside 5'-monophosphates. In addition, possesses a phosphotransferase activity by which it can transfer a phosphate from a donor nucleoside monophosphate to an acceptor nucleoside, preferably inosine, deoxyinosine and guanosine. Has the highest activities for IMP and GMP followed by dIMP, dGMP and XMP. Could also catalyze the transfer of phosphates from pyrimidine monophosphates but with lower efficiency. Through these activities regulates the purine nucleoside/nucleotide pools within the cell. This chain is Cytosolic purine 5'-nucleotidase (NT5C2), found in Gallus gallus (Chicken).